The sequence spans 120 residues: Non-specific lipid-transfer protein 1 (120 aa).

Positions M1–A25 are cleaved as a signal peptide. 4 disulfide bridges follow: C29–C78, C39–C55, C56–C101, and C76–C115. Residue F120 is a propeptide.

The protein belongs to the plant LTP family. Expressed in roots, stem, leaves and tendrils of the mature plant.

Plant non-specific lipid-transfer proteins transfer phospholipids as well as galactolipids across membranes. May play a role in wax or cutin deposition in the cell walls of expanding epidermal cells and certain secretory tissues. Binds saturated and unsaturated lipids, jasmonic acid and lysolipids. Has antifungal activity against A.niger VKM F-2259 (IC(50)=40 uM), F.oxysporum TCXA-4 (IC(50)=20-40), F.solani VKM F-142 (IC(50)=20-40 uM) and N.crassa VKM F-184 (IC(50)=40 uM). Has weak antibacterial activity against A.tumefaciens A281, C.michiganensis VKM Ac-1144 and P.syringae VKM B-1546. This chain is Non-specific lipid-transfer protein 1, found in Pisum sativum (Garden pea).